Here is a 434-residue protein sequence, read N- to C-terminus: Adenylosuccinate synthetase (434 aa).

Residues G13 to K19 and G41 to T43 contribute to the GTP site. Catalysis depends on D14, which acts as the Proton acceptor. The Mg(2+) site is built by D14 and G41. IMP contacts are provided by residues D14 to K17, N39 to H42, T133, R147, Q228, T243, and R307. H42 functions as the Proton donor in the catalytic mechanism. Substrate is bound at residue S303–R309. GTP is bound by residues R309, K335 to D337, and S417 to G419.

The protein belongs to the adenylosuccinate synthetase family. As to quaternary structure, homodimer. Mg(2+) is required as a cofactor.

The protein resides in the cytoplasm. It catalyses the reaction IMP + L-aspartate + GTP = N(6)-(1,2-dicarboxyethyl)-AMP + GDP + phosphate + 2 H(+). The protein operates within purine metabolism; AMP biosynthesis via de novo pathway; AMP from IMP: step 1/2. In terms of biological role, plays an important role in the de novo pathway of purine nucleotide biosynthesis. Catalyzes the first committed step in the biosynthesis of AMP from IMP. The chain is Adenylosuccinate synthetase from Wigglesworthia glossinidia brevipalpis.